The primary structure comprises 933 residues: Serine/threonine-protein kinase PknD (933 aa).

Residues 4–291 (YDIIRMIGKG…ELKDDIEQHL (288 aa)) form the Protein kinase domain. ATP-binding positions include 10-18 (IGKGGMGEV) and Lys-33. Asp-138 serves as the catalytic Proton acceptor.

Belongs to the protein kinase superfamily. Ser/Thr protein kinase family. In terms of processing, autophosphorylated on serine and threonine residues.

It carries out the reaction L-seryl-[protein] + ATP = O-phospho-L-seryl-[protein] + ADP + H(+). It catalyses the reaction L-threonyl-[protein] + ATP = O-phospho-L-threonyl-[protein] + ADP + H(+). In terms of biological role, together with the serine/threonine kinase Pkn1, may play a role in the specific interactions with host proteins during intracellular growth. This is Serine/threonine-protein kinase PknD from Chlamydia felis (strain Fe/C-56) (Chlamydophila felis).